The following is a 408-amino-acid chain: Snake venom 5'-nucleotidase (408 aa).

Residues histidine 54 and histidine 77 each coordinate Zn(2+). N-linked (GlcNAc...) asparagine glycosylation is found at asparagine 167 and asparagine 181. 2 disulfide bridges follow: cysteine 187–cysteine 192 and cysteine 199–cysteine 221. Arginine 188 is an AMP binding site. AMP is bound by residues asparagine 224, arginine 229, and phenylalanine 252. Residues cysteine 311 and cysteine 314 are joined by a disulfide bond. The AMP site is built by phenylalanine 335 and aspartate 341. Propeptides (removed in mature form) lie at residues 385–388 and 385–408; these read DGTL and DGTL…FFIL.

This sequence belongs to the 5'-nucleotidase family. In terms of assembly, homodimer. In terms of processing, venom 5'-nucleotidases (or a part thereof) may be released into the venom via exosome-like vesicles. They may be attached via a GPI anchor to the membrane of these vesicles. Soluble forms of 5'-nucleotidase might be released by cleavage of the ectodomain in the exosome-like vesicles or venom gland cells. In terms of tissue distribution, expressed by the venom gland.

Its subcellular location is the membrane. The enzyme catalyses a ribonucleoside 5'-phosphate + H2O = a ribonucleoside + phosphate. It carries out the reaction AMP + H2O = adenosine + phosphate. The catalysed reaction is GMP + H2O = guanosine + phosphate. It catalyses the reaction ADP + H2O = AMP + phosphate + H(+). Is potently inhibited by metal ions Fe(3+), Cu(2+) and Zn(2+). Is enhanced by Mn(2+). Ca(2+) and Mg(2+) have no effect. Hydrolyzes nucleotides into nucleosides. Prefers AMP as the substrate but also cleaves GMP and ADP. Does not affect AMP, cAMP and cGMP. Inhibits ADP- and collagen-induced platelet aggregation. Snake venom 5'-nucleotidases are widely distributed among venomous snake taxa, but there is a lack of information about their biological activities. They have been shown to inhibit platelet aggregation. This effect may be due to the liberation of inhibitory AMP or adenosine by its action on ADP released upon initiation of aggregation. Venom 5'-nucleotidases are also known to synergistically act in vivo with other toxins like ADPases, phospholipases, and disintegrins to exert a more pronounced anti-coagulant effect. The sequence is that of Snake venom 5'-nucleotidase from Macrovipera lebetinus (Levantine viper).